Here is a 658-residue protein sequence, read N- to C-terminus: Interferon-induced GTP-binding protein Mx1 (658 aa).

Residue Met1 is modified to N-acetylmethionine. Residues 1–20 are disordered; the sequence is MVNSKGKITDSDPGSSHLLL. In terms of domain architecture, Dynamin-type G spans 65-338; sequence DLALPAIAVI…LITHICKTLP (274 aa). The interval 75–82 is G1 motif; it reads GDQSSGKS. 75–82 is a GTP binding site; that stretch reads GDQSSGKS. Positions 100-102 are G2 motif; that stretch reads VTR. The G3 motif stretch occupies residues 176-179; that stretch reads DLPG. GTP is bound by residues 176–180 and 245–248; these read DLPGI and TKPD. Residues 245 to 248 are G4 motif; the sequence is TKPD. The tract at residues 277–280 is G5 motif; the sequence is KCRG. A bundle signaling element (BSE) region spans residues 339-364; the sequence is LLENQIKENYEKITEELQKYGSDVPE. The segment at 364–531 is middle domain; that stretch reads EEEHEKMFFL…HFQMEQIVYC (168 aa). Residues 365–628 are stalk; sequence EEHEKMFFLI…KDTHNWLLKE (264 aa). Positions 551-554 are critical for lipid-binding; sequence KDRK. The GED domain maps to 570–658; sequence LSDIFEHLLA…ARRRLAKFPG (89 aa).

This sequence belongs to the TRAFAC class dynamin-like GTPase superfamily. Dynamin/Fzo/YdjA family. As to quaternary structure, homooligomer. Oligomerizes into multimeric filamentous or ring-like structures by virtue of its stalk domain. Oligomerization is critical for GTPase activity, protein stability, and recognition of viral target structures. Interacts with TRPC1, TRPC3, TRPC4, TRPC5, TRPC6 and TRPC7. Interacts with HSPA5. Interacts with TUBB/TUBB5. Interacts with DDX39A and DDX39B. Post-translationally, ISGylated.

It is found in the cytoplasm. Its subcellular location is the endoplasmic reticulum membrane. It localises to the perinuclear region. In terms of biological role, interferon-induced dynamin-like GTPase with antiviral activity. This chain is Interferon-induced GTP-binding protein Mx1 (MX1), found in Eumetopias jubatus (Steller sea lion).